Reading from the N-terminus, the 212-residue chain is Uridine kinase (212 aa).

An ATP-binding site is contributed by 12–19 (GGSGGGKT).

Belongs to the uridine kinase family.

It is found in the cytoplasm. The enzyme catalyses uridine + ATP = UMP + ADP + H(+). It catalyses the reaction cytidine + ATP = CMP + ADP + H(+). Its pathway is pyrimidine metabolism; CTP biosynthesis via salvage pathway; CTP from cytidine: step 1/3. The protein operates within pyrimidine metabolism; UMP biosynthesis via salvage pathway; UMP from uridine: step 1/1. The polypeptide is Uridine kinase (Streptococcus pneumoniae serotype 2 (strain D39 / NCTC 7466)).